Here is a 102-residue protein sequence, read N- to C-terminus: DNA/RNA-binding protein Alba 2 (102 aa).

Arginine 10, arginine 13, arginine 40, arginine 42, asparagine 43, arginine 46, and arginine 86 together coordinate DNA.

This sequence belongs to the histone-like Alba family. As to quaternary structure, forms homodimers and homotetramers; oligomerization is enhanced and stabilized by DNA. Interacts with Alba 1.

The protein resides in the cytoplasm. The protein localises to the chromosome. Functionally, binds double-stranded DNA tightly but without sequence specificity. Involved in DNA compaction. This Aeropyrum pernix (strain ATCC 700893 / DSM 11879 / JCM 9820 / NBRC 100138 / K1) protein is DNA/RNA-binding protein Alba 2.